A 317-amino-acid polypeptide reads, in one-letter code: Ribosomal protein L11 methyltransferase (317 aa).

S-adenosyl-L-methionine-binding residues include Thr158, Gly179, Asp201, and Asn244.

It belongs to the methyltransferase superfamily. PrmA family.

The protein localises to the cytoplasm. It carries out the reaction L-lysyl-[protein] + 3 S-adenosyl-L-methionine = N(6),N(6),N(6)-trimethyl-L-lysyl-[protein] + 3 S-adenosyl-L-homocysteine + 3 H(+). Functionally, methylates ribosomal protein L11. This chain is Ribosomal protein L11 methyltransferase, found in Streptococcus uberis (strain ATCC BAA-854 / 0140J).